The sequence spans 272 residues: Putative B3 domain-containing protein Os02g0455900 (272 aa).

Residues 30-134 (GKVLMPSDVS…RFFICCRCTC (105 aa)) constitute a DNA-binding region (TF-B3). The interval 189–227 (TASLGCAAAQPPQVPPTPTPRRRRRSMMVHPEPPEHTTD) is disordered.

It localises to the nucleus. The protein is Putative B3 domain-containing protein Os02g0455900 of Oryza sativa subsp. japonica (Rice).